The following is a 510-amino-acid chain: NADP-dependent fatty aldehyde dehydrogenase (510 aa).

229-234 is a binding site for NADP(+); that stretch reads GSVGGG. Residues glutamate 253 and cysteine 289 contribute to the active site.

The protein belongs to the aldehyde dehydrogenase family. In terms of assembly, homodimer.

The enzyme catalyses an aldehyde + NADP(+) + H2O = a carboxylate + NADPH + 2 H(+). Functionally, catalyzes the oxidation of long-chain aliphatic aldehydes to acids. May be implicated in controlling luminescence as it catalyzes the oxidation of the fatty aldehyde substrate for the light-emitting reaction. This is NADP-dependent fatty aldehyde dehydrogenase (aldH) from Vibrio harveyi (Beneckea harveyi).